We begin with the raw amino-acid sequence, 1277 residues long: NPC intracellular cholesterol transporter 1 (1277 aa).

The N-terminal stretch at methionine 1–serine 22 is a signal peptide. Residues glutamine 23–tyrosine 269 are Lumenal-facing. 9 disulfides stabilise this stretch: cysteine 25-cysteine 74, cysteine 31-cysteine 42, cysteine 63-cysteine 109, cysteine 75-cysteine 113, cysteine 97-cysteine 238, cysteine 100-cysteine 160, cysteine 177-cysteine 184, cysteine 227-cysteine 243, and cysteine 240-cysteine 247. A cholesterol-binding site is contributed by asparagine 41. Asparagine 70 carries N-linked (GlcNAc...) asparagine glycosylation. Glutamine 79 contributes to the cholesterol binding site. 2 N-linked (GlcNAc...) asparagine glycosylation sites follow: asparagine 122 and asparagine 137. The tract at residues leucine 175–isoleucine 205 is important for cholesterol binding and cholesterol transfer from NPC1 to liposomes. Asparagine 185, asparagine 222, and asparagine 228 each carry an N-linked (GlcNAc...) asparagine glycan. A helical transmembrane segment spans residues valine 270–valine 290. Residues tryptophan 291–proline 350 lie on the Cytoplasmic side of the membrane. The helical transmembrane segment at threonine 351 to valine 371 threads the bilayer. Residues glutamine 372–valine 621 lie on the Lumenal side of the membrane. N-linked (GlcNAc...) asparagine glycans are attached at residues asparagine 414, asparagine 459, asparagine 478, and asparagine 524. 2 cysteine pairs are disulfide-bonded: cysteine 468–cysteine 479 and cysteine 516–cysteine 533. The SSD domain occupies aspartate 620–leucine 785. The helical transmembrane segment at phenylalanine 622–isoleucine 642 threads the bilayer. Residues glutamine 643–lysine 653 are Cytoplasmic-facing. Residues isoleucine 654–isoleucine 674 form a helical membrane-spanning segment. Topologically, residues phenylalanine 675 to threonine 683 are lumenal. Residues leucine 684 to isoleucine 704 form a helical membrane-spanning segment. Residues leucine 705–glutamate 730 lie on the Cytoplasmic side of the membrane. The chain crosses the membrane as a helical span at residues valine 731–leucine 751. At serine 752–threonine 759 the chain is on the lumenal side. A helical membrane pass occupies residues phenylalanine 760–valine 780. Residues serine 781–aspartate 832 are Cytoplasmic-facing. The chain crosses the membrane as a helical span at residues tryptophan 833 to valine 853. Over asparagine 854–threonine 1097 the chain is Lumenal. Residues asparagine 868 and asparagine 898 are each glycosylated (N-linked (GlcNAc...) asparagine). The cysteines at positions 909 and 914 are disulfide-linked. N-linked (GlcNAc...) asparagine glycans are attached at residues asparagine 916, asparagine 961, asparagine 968, and asparagine 1063. 3 cysteine pairs are disulfide-bonded: cysteine 956–cysteine 1011, cysteine 957–cysteine 979, and cysteine 967–cysteine 976. A helical transmembrane segment spans residues isoleucine 1098 to cysteine 1118. The Cytoplasmic portion of the chain corresponds to glutamate 1119 to alanine 1123. The helical transmembrane segment at valine 1124–tryptophan 1144 threads the bilayer. Position 1145 (glycine 1145) is a topological domain, lumenal. Residues isoleucine 1146–phenylalanine 1166 traverse the membrane as a helical segment. The Cytoplasmic segment spans residues cysteine 1167–glycine 1194. The helical transmembrane segment at serine 1195–alanine 1215 threads the bilayer. Over lysine 1216–arginine 1226 the chain is Lumenal. The chain crosses the membrane as a helical span at residues methionine 1227 to leucine 1247. The Cytoplasmic portion of the chain corresponds to serine 1248 to phenylalanine 1277. The tract at residues leucine 1274–phenylalanine 1277 is required for location in lysosomes. The Di-leucine motif motif lies at leucine 1274–phenylalanine 1277.

Belongs to the patched family. As to quaternary structure, interacts (via the second lumenal domain) with NPC2. Interacts with TMEM97; the interaction may decrease NPC1 availability to the cell. Interacts with TIM1. Interacts with SLC38A9; this interaction inhibits cholesterol-mediated mTORC1 activation via its sterol transport activity. In terms of processing, N-glycosylated. As to expression, detected in liver (at protein level). Ubiquitous. Detected in adult heart, spleen, lung, liver, skeletal muscle, kidney, testis.

It is found in the late endosome membrane. The protein localises to the lysosome membrane. The enzyme catalyses cholesterol(in) = cholesterol(out). In terms of biological role, intracellular cholesterol transporter which acts in concert with NPC2 and plays an important role in the egress of cholesterol from the endosomal/lysosomal compartment. Unesterified cholesterol that has been released from LDLs in the lumen of the late endosomes/lysosomes is transferred by NPC2 to the cholesterol-binding pocket in the N-terminal domain of NPC1. Cholesterol binds to NPC1 with the hydroxyl group buried in the binding pocket. May play a role in vesicular trafficking in glia, a process that may be crucial for maintaining the structural and functional integrity of nerve terminals. Inhibits cholesterol-mediated mTORC1 activation throught its interaction with SLC38A9. In Mus musculus (Mouse), this protein is NPC intracellular cholesterol transporter 1.